Here is a 105-residue protein sequence, read N- to C-terminus: Iron-sulfur cluster assembly protein CyaY (105 aa).

It belongs to the frataxin family.

Its function is as follows. Involved in iron-sulfur (Fe-S) cluster assembly. May act as a regulator of Fe-S biogenesis. The protein is Iron-sulfur cluster assembly protein CyaY of Paraburkholderia phymatum (strain DSM 17167 / CIP 108236 / LMG 21445 / STM815) (Burkholderia phymatum).